Consider the following 65-residue polypeptide: Muscarinic toxin-like protein 2 (65 aa).

Cystine bridges form between C3–C24, C17–C42, C46–C57, and C58–C63.

Belongs to the three-finger toxin family. Short-chain subfamily. Type C muscarinic toxin sub-subfamily. As to quaternary structure, monomer. In terms of tissue distribution, expressed by the venom gland.

It is found in the secreted. This Naja kaouthia (Monocled cobra) protein is Muscarinic toxin-like protein 2.